A 206-amino-acid polypeptide reads, in one-letter code: N-(5'-phosphoribosyl)anthranilate isomerase (206 aa).

Belongs to the TrpF family.

It catalyses the reaction N-(5-phospho-beta-D-ribosyl)anthranilate = 1-(2-carboxyphenylamino)-1-deoxy-D-ribulose 5-phosphate. It functions in the pathway amino-acid biosynthesis; L-tryptophan biosynthesis; L-tryptophan from chorismate: step 3/5. This is N-(5'-phosphoribosyl)anthranilate isomerase from Azotobacter vinelandii (strain DJ / ATCC BAA-1303).